The sequence spans 146 residues: Extracellular globin-2A (146 aa).

The Globin domain occupies 4 to 146 (HCGPLQRLKV…EVIYPGIKHD (143 aa)). Cys5 and Cys134 are disulfide-bonded. His97 is a binding site for heme b.

Belongs to the globin family. As to quaternary structure, disulfide bonded trimer of chains IIA, IIB, and IIC.

This is Extracellular globin-2A from Tylorrhynchus heterochetus (Japanese palolo worm).